The following is a 472-amino-acid chain: UDP-glycosyltransferase 2 (472 aa).

Residues S283, 348–349 (WA), 366–374 (HCGWNSVLE), and 388–391 (YAEQ) contribute to the UDP-alpha-D-glucose site.

It belongs to the UDP-glycosyltransferase family. As to expression, highly expressed in roots. Expressed in leaves and stems.

Functionally, glycosyltransferase that possesses isoflavonoids 4'-O- and 7-O-glucosyltransferase activities. Shows a successive glucosylation toward the acceptors producing their corresponding 4',7-O-diglucosides. Can use genistein, formononetin, daidzein, liquiritigenin and naringenin as substrates. Also shows a 3'-O-glucosylation activity in vitro. The sequence is that of UDP-glycosyltransferase 2 from Pueraria montana var. lobata (Kudzu vine).